Consider the following 256-residue polypeptide: Small ribosomal subunit protein eS1 (256 aa).

The residue at position 2 (Ala-2) is an N-acetylalanine; partial.

This sequence belongs to the eukaryotic ribosomal protein eS1 family. As to quaternary structure, component of the small ribosomal subunit. Mature ribosomes consist of a small (40S) and a large (60S) subunit. The 40S subunit contains about 33 different proteins and 1 molecule of RNA (18S). The 60S subunit contains about 49 different proteins and 3 molecules of RNA (25S, 5.8S and 5S).

The protein localises to the cytoplasm. The chain is Small ribosomal subunit protein eS1 from Laccaria bicolor (strain S238N-H82 / ATCC MYA-4686) (Bicoloured deceiver).